A 962-amino-acid chain; its full sequence is Protein lin-36 (962 aa).

Disordered stretches follow at residues 1–53 and 74–99; these read MSEE…ETEG and TSSG…PREE. Basic and acidic residues predominate over residues 23 to 40; it reads DSHVTVHSVEQDSQHSGE. Over residues 74–95 the composition is skewed to polar residues; the sequence is TSSGEVLDESQVTPTKQASSSQ. The segment at 161 to 249 adopts a THAP-type zinc-finger fold; the sequence is LTHKPCTVCN…IEAFGVPVAI (89 aa). Basic and acidic residues-rich tracts occupy residues 452 to 472 and 534 to 570; these read KAEE…KHAE and SHEE…DEQF. 4 disordered regions span residues 452-575, 612-676, 744-788, and 932-962; these read KAEE…KMVQ, IAAT…PEER, QEKG…SASS, and DPKW…DSQQ. Positions 626–637 are enriched in low complexity; that stretch reads SSEQTPEPTTSQ. A compositionally biased stretch (basic and acidic residues) spans 647 to 658; sequence KTKESAVQKVEK. Positions 939 to 951 are enriched in low complexity; sequence QQQQQQQQQQQEQ. The span at 952 to 962 shows a compositional bias: polar residues; it reads FPGQGSSDSQQ.

In terms of tissue distribution, expressed in vulval precursor P(3-8).p cells and their descendants, neurons of the head, tail and ventral cord, hypodermal and intestinal cells and germline cells.

Its subcellular location is the nucleus. Required to negatively regulate vulval development. Antagonizes Ras-mediated vulval induction. Acts cell autonomously. In Caenorhabditis elegans, this protein is Protein lin-36 (lin-36).